A 1236-amino-acid chain; its full sequence is DNA topoisomerase 2 (1236 aa).

Residues Asn65, Asn96, 124–126, 137–144, and 354–356 each bind ATP; these read SSN, GRHGYGAK, and QSK. A Toprim domain is found at 434 to 548; sequence RTLIITEGDS…KLLQNNPGYI (115 aa). Mg(2+)-binding residues include Glu440, Asp517, and Asp519. The Topo IIA-type catalytic domain maps to 685–1101; that stretch reads IPHCVDGLKP…TPVKMWLTEL (417 aa). Tyr775 serves as the catalytic O-(5'-phospho-DNA)-tyrosine intermediate. Positions 956-965 are interaction with DNA; that stretch reads ALAQRIYING. Positions 1161–1211 are disordered; it reads YEKPPPSKRRPGESVGGARPSDSAARTVGKRLVGSRSEFKNKKPMSRKNNV.

It belongs to the type II topoisomerase family. In terms of assembly, homodimer. It depends on Mg(2+) as a cofactor. The cofactor is Mn(2+). Ca(2+) is required as a cofactor.

Its subcellular location is the nucleus. The catalysed reaction is ATP-dependent breakage, passage and rejoining of double-stranded DNA.. Functionally, control of topological states of DNA by transient breakage and subsequent rejoining of DNA strands. Topoisomerase II makes double-strand breaks. The sequence is that of DNA topoisomerase 2 (TOP2) from Leishmania chagasi.